The sequence spans 182 residues: Regulatory protein RecX (182 aa).

The tract at residues 12–54 (LSQRDHSESELRRKLAAPPFSAKGNWGKRSGAKSSNLVESNPV) is disordered. The span at 13–24 (SQRDHSESELRR) shows a compositional bias: basic and acidic residues. Polar residues predominate over residues 43–54 (AKSSNLVESNPV).

Belongs to the RecX family.

The protein localises to the cytoplasm. In terms of biological role, modulates RecA activity. The sequence is that of Regulatory protein RecX from Yersinia pseudotuberculosis serotype I (strain IP32953).